The chain runs to 501 residues: Mitogen-activated protein kinase MKC1 (501 aa).

The 312-residue stretch at 28–339 (FKIVKELGHG…VRDALNHKYL (312 aa)) folds into the Protein kinase domain. Residues 34–42 (LGHGAYGIV) and Lys74 each bind ATP. Asp174 serves as the catalytic Proton acceptor. Position 211 is a phosphothreonine (Thr211). The TXY motif lies at 211 to 213 (TEY). Tyr213 carries the phosphotyrosine modification. The interval 400 to 450 (MQKREEQRQEEEEKELLEQQRQFPAQESMDISQTPYNNLETNIGTPQVEDD) is disordered. Over residues 422-444 (FPAQESMDISQTPYNNLETNIGT) the composition is skewed to polar residues.

This sequence belongs to the protein kinase superfamily. CMGC Ser/Thr protein kinase family. MAP kinase subfamily. It depends on Mg(2+) as a cofactor. Post-translationally, dually phosphorylated on Thr-211 and Tyr-213, which activates the enzyme.

The catalysed reaction is L-seryl-[protein] + ATP = O-phospho-L-seryl-[protein] + ADP + H(+). It catalyses the reaction L-threonyl-[protein] + ATP = O-phospho-L-threonyl-[protein] + ADP + H(+). Its activity is regulated as follows. Activated by tyrosine and threonine phosphorylation. This Candida albicans (Yeast) protein is Mitogen-activated protein kinase MKC1 (MKC1).